The sequence spans 329 residues: Oxidoreductase sirO (329 aa).

Asp54 lines the NADP(+) pocket. Tyr59 (proton donor) is an active-site residue. His118 is a binding site for substrate. NADP(+) contacts are provided by residues 148–149 (SN), Gln174, 203–213 (SPLCCGLLINA), and 288–296 (SSARQLEES).

The protein belongs to the aldo/keto reductase family. Aldo/keto reductase 2 subfamily.

The protein operates within mycotoxin biosynthesis. Its function is as follows. Oxidoreductase; part of the gene cluster that mediates the biosynthesis of sirodesmin PL, an epipolythiodioxopiperazine (ETP) characterized by a disulfide bridged cyclic dipeptide and that acts as a phytotoxin which is involved in the blackleg didease of canola. SirD catalyzes the O-prenylation of L-tyrosine (L-Tyr) in the presence of dimethylallyl diphosphate (DMAPP) to yield 4-O-dimethylallyl-L-Tyr, and therefore represents probably the first pathway-specific enzyme in the biosynthesis of sirodesmin PL. 4-O-dimethylallyl-L-Tyr, then undergoes condensation with L-Ser in a reaction catalyzed by the non-ribosomal peptide synthase sirP to form the diketopiperazine (DKP) backbone. Further bishydroxylation of the DKP performed by the cytochrome P450 monooxygenase sirC leads to the production of the intermediate phomamide. This step is essential to form the reactive thiol group required for toxicity of sirodesmin PL. The next steps of sirodesmin biosynthesis are not well understood yet, but some predictions could be made from intermediate compounds identification. Phomamide is converted into phomalizarine via oxidation, probably by sirT. Further oxidation, methylation (by sirM or sirN) and reduction steps convert phomalizarine to deacetyl sirodesmin. Finally, acetyltransferase sirH probably acetylates deacetyl sirodesmin to produce sirodesmin PL. The protein is Oxidoreductase sirO of Leptosphaeria maculans (Blackleg fungus).